The sequence spans 438 residues: ATP-dependent protease ATPase subunit HslU (438 aa).

ATP is bound by residues isoleucine 18, 60-65, aspartate 251, glutamate 316, and arginine 388; that span reads GVGKTE.

This sequence belongs to the ClpX chaperone family. HslU subfamily. As to quaternary structure, a double ring-shaped homohexamer of HslV is capped on each side by a ring-shaped HslU homohexamer. The assembly of the HslU/HslV complex is dependent on binding of ATP.

It localises to the cytoplasm. ATPase subunit of a proteasome-like degradation complex; this subunit has chaperone activity. The binding of ATP and its subsequent hydrolysis by HslU are essential for unfolding of protein substrates subsequently hydrolyzed by HslV. HslU recognizes the N-terminal part of its protein substrates and unfolds these before they are guided to HslV for hydrolysis. This is ATP-dependent protease ATPase subunit HslU from Jannaschia sp. (strain CCS1).